Reading from the N-terminus, the 479-residue chain is Protein ORD (479 aa).

The tract at residues 102 to 140 (KEEETEPESESDLDEGPSTSKQALERMVQRAERKAKEAS) is disordered. Positions 104–116 (EETEPESESDLDE) are enriched in acidic residues. The segment covering 124-140 (ALERMVQRAERKAKEAS) has biased composition (basic and acidic residues).

As to quaternary structure, interacts with Sce.

Its subcellular location is the nucleus. The protein resides in the chromosome. It localises to the centromere. Functionally, essential for proper maintenance of sister-chromatid cohesion in both male and female meiosis. Mutations in ord cause premature separation of the sister chromatids in meiosis I and random segregation in both meiotic divisions. Required for chiasma maintenance in female meiosis. Mutations in ord reduce recombination in female meiosis. This chain is Protein ORD (ord), found in Drosophila melanogaster (Fruit fly).